Here is a 286-residue protein sequence, read N- to C-terminus: Toxin zeta (286 aa).

ATP is bound at residue 39-46 (GQPGSGKT). The tract at residues 249-286 (MVQNQHQETPEFKAIQQKMESLQPPTPPIPKTPKLPGI) is disordered. Residues 272-286 (PPTPPIPKTPKLPGI) show a composition bias toward pro residues.

It belongs to the zeta toxin family. As to quaternary structure, in the presence of the epsilon antitoxin, forms an inactive PezA(2)PezT(2) heterotetramer.

The catalysed reaction is UDP-N-acetyl-alpha-D-glucosamine + ATP = UDP-N-acetyl-alpha-D-glucosamine 3'-phosphate + ADP + H(+). Toxic component of a type II toxin-antitoxin (TA) system. Phosphorylates UDP-N-acetyl-D-glucosamine (UNAG) on the 3'-hydroxyl group of the N-acetyl-D-glucosamine moiety, yielding UNAG-3P. UNAG-3P inhibits MurA, the first committed step in cell wall synthesis, which is then blocked. Phosphorylation is inhibited by cognate epsilon antitoxin. Part of a postsegregational killing (PSK) system involved in the killing of plasmid-free cells. The zeta toxin induces programmed cell death. The chain is Toxin zeta from Enterococcus hirae.